Consider the following 201-residue polypeptide: Ras-related protein RabA (201 aa).

Residue 15-22 (GDSGVGKS) participates in GTP binding. An Effector region motif is present at residues 37–45 (YISTIGVDF). GTP is bound by residues 63–67 (DTAGQ) and 121–124 (NKSD). At Cys-198 the chain carries Cysteine methyl ester. Cys-198 carries S-geranylgeranyl cysteine lipidation. The propeptide at 199–201 (IIN) is removed in mature form.

Belongs to the small GTPase superfamily. Rab family.

Its subcellular location is the cell membrane. This Dictyostelium discoideum (Social amoeba) protein is Ras-related protein RabA (rabA).